The chain runs to 164 residues: Endoribonuclease YbeY (164 aa).

Histidine 117, histidine 121, and histidine 127 together coordinate Zn(2+).

It belongs to the endoribonuclease YbeY family. Zn(2+) serves as cofactor.

The protein resides in the cytoplasm. Functionally, single strand-specific metallo-endoribonuclease involved in late-stage 70S ribosome quality control and in maturation of the 3' terminus of the 16S rRNA. This is Endoribonuclease YbeY from Mycoplasma mycoides subsp. mycoides SC (strain CCUG 32753 / NCTC 10114 / PG1).